Here is a 298-residue protein sequence, read N- to C-terminus: Lipoyl synthase 1 (298 aa).

The [4Fe-4S] cluster site is built by Cys34, Cys39, Cys45, Cys60, Cys64, Cys67, and Ser274. The region spanning Phe46–Leu263 is the Radical SAM core domain.

It belongs to the radical SAM superfamily. Lipoyl synthase family. Requires [4Fe-4S] cluster as cofactor.

The protein resides in the cytoplasm. It catalyses the reaction [[Fe-S] cluster scaffold protein carrying a second [4Fe-4S](2+) cluster] + N(6)-octanoyl-L-lysyl-[protein] + 2 oxidized [2Fe-2S]-[ferredoxin] + 2 S-adenosyl-L-methionine + 4 H(+) = [[Fe-S] cluster scaffold protein] + N(6)-[(R)-dihydrolipoyl]-L-lysyl-[protein] + 4 Fe(3+) + 2 hydrogen sulfide + 2 5'-deoxyadenosine + 2 L-methionine + 2 reduced [2Fe-2S]-[ferredoxin]. The protein operates within protein modification; protein lipoylation via endogenous pathway; protein N(6)-(lipoyl)lysine from octanoyl-[acyl-carrier-protein]: step 2/2. Catalyzes the radical-mediated insertion of two sulfur atoms into the C-6 and C-8 positions of the octanoyl moiety bound to the lipoyl domains of lipoate-dependent enzymes, thereby converting the octanoylated domains into lipoylated derivatives. The sequence is that of Lipoyl synthase 1 from Thermosynechococcus vestitus (strain NIES-2133 / IAM M-273 / BP-1).